The primary structure comprises 417 residues: UDP-N-acetylglucosamine 1-carboxyvinyltransferase (417 aa).

22–23 (KN) lines the phosphoenolpyruvate pocket. Arg93 lines the UDP-N-acetyl-alpha-D-glucosamine pocket. Residue Cys117 is the Proton donor of the active site. Cys117 bears the 2-(S-cysteinyl)pyruvic acid O-phosphothioketal mark. Residues 122 to 126 (RPVDQ), Asp305, and Ile327 contribute to the UDP-N-acetyl-alpha-D-glucosamine site.

The protein belongs to the EPSP synthase family. MurA subfamily.

Its subcellular location is the cytoplasm. The catalysed reaction is phosphoenolpyruvate + UDP-N-acetyl-alpha-D-glucosamine = UDP-N-acetyl-3-O-(1-carboxyvinyl)-alpha-D-glucosamine + phosphate. Its pathway is cell wall biogenesis; peptidoglycan biosynthesis. In terms of biological role, cell wall formation. Adds enolpyruvyl to UDP-N-acetylglucosamine. In Dechloromonas aromatica (strain RCB), this protein is UDP-N-acetylglucosamine 1-carboxyvinyltransferase.